Reading from the N-terminus, the 573-residue chain is DEAD-box ATP-dependent RNA helicase 47B (573 aa).

A Q motif motif is present at residues 131-159; the sequence is KSFEELGLPPLLIDRLNKEGLSTPTEVQS. The Helicase ATP-binding domain maps to 162-362; it reads IPIISQKHDA…RSWGHDPVLV (201 aa). 175-182 contributes to the ATP binding site; sequence SYTGSGKT. The DEAD box signature appears at 293–296; it reads DEVD. The 145-residue stretch at 421 to 565 folds into the Helicase C-terminal domain; the sequence is TLRRCIHALE…PCEFTEGKLL (145 aa).

Belongs to the DEAD box helicase family.

It carries out the reaction ATP + H2O = ADP + phosphate + H(+). This chain is DEAD-box ATP-dependent RNA helicase 47B, found in Oryza sativa subsp. japonica (Rice).